The following is a 246-amino-acid chain: Uridylate kinase (246 aa).

Position 19-22 (19-22 (KISG)) interacts with ATP. Gly61 provides a ligand contact to UMP. The ATP site is built by Gly62 and Arg66. Residues Asp81 and 142-149 (TGNPFFTT) contribute to the UMP site. ATP is bound by residues Thr169, Gln170, Tyr175, and Asp178.

Belongs to the UMP kinase family. Homohexamer.

Its subcellular location is the cytoplasm. It carries out the reaction UMP + ATP = UDP + ADP. The protein operates within pyrimidine metabolism; CTP biosynthesis via de novo pathway; UDP from UMP (UMPK route): step 1/1. Inhibited by UTP. Catalyzes the reversible phosphorylation of UMP to UDP. This chain is Uridylate kinase, found in Wolbachia sp. subsp. Brugia malayi (strain TRS).